Reading from the N-terminus, the 217-residue chain is MSIAALIDHTLLAPDVTAQHIRTLCREAVDHGFATVCVSPTRVRLAADELAGHAPRVCSVIGFPSGAHLSEIRAAETKAAVNDGADEIDMVINVGAVKDDDWDTVESDISAVVDAAGMAIVKVILEVSELTDEEITRACQAAERCGADFVKTSTGYSRHGATAEAVSLMRRTVGDRLGVKASGGIRTHNDVATMLRAGATRIGASAGVALLVDEEAL.

Catalysis depends on aspartate 89, which acts as the Proton donor/acceptor. Lysine 151 functions as the Schiff-base intermediate with acetaldehyde in the catalytic mechanism. Catalysis depends on lysine 180, which acts as the Proton donor/acceptor.

It belongs to the DeoC/FbaB aldolase family. DeoC type 1 subfamily.

Its subcellular location is the cytoplasm. It carries out the reaction 2-deoxy-D-ribose 5-phosphate = D-glyceraldehyde 3-phosphate + acetaldehyde. It participates in carbohydrate degradation; 2-deoxy-D-ribose 1-phosphate degradation; D-glyceraldehyde 3-phosphate and acetaldehyde from 2-deoxy-alpha-D-ribose 1-phosphate: step 2/2. Catalyzes a reversible aldol reaction between acetaldehyde and D-glyceraldehyde 3-phosphate to generate 2-deoxy-D-ribose 5-phosphate. This chain is Deoxyribose-phosphate aldolase 1, found in Cutibacterium acnes (strain DSM 16379 / KPA171202) (Propionibacterium acnes).